A 168-amino-acid polypeptide reads, in one-letter code: Small ribosomal subunit protein uS5 (168 aa).

The S5 DRBM domain maps to 14-77 (FEERVVSINR…EAAKKNLITV (64 aa)).

This sequence belongs to the universal ribosomal protein uS5 family. As to quaternary structure, part of the 30S ribosomal subunit. Contacts proteins S4 and S8.

Its function is as follows. With S4 and S12 plays an important role in translational accuracy. Functionally, located at the back of the 30S subunit body where it stabilizes the conformation of the head with respect to the body. The sequence is that of Small ribosomal subunit protein uS5 from Lactococcus lactis subsp. lactis (strain IL1403) (Streptococcus lactis).